We begin with the raw amino-acid sequence, 372 residues long: Alanine racemase (372 aa).

Lys-33 serves as the catalytic Proton acceptor; specific for D-alanine. An N6-(pyridoxal phosphate)lysine modification is found at Lys-33. Arg-131 lines the substrate pocket. The active-site Proton acceptor; specific for L-alanine is the Tyr-261. Met-309 contributes to the substrate binding site.

Belongs to the alanine racemase family. Pyridoxal 5'-phosphate serves as cofactor.

The catalysed reaction is L-alanine = D-alanine. The protein operates within amino-acid biosynthesis; D-alanine biosynthesis; D-alanine from L-alanine: step 1/1. Functionally, catalyzes the interconversion of L-alanine and D-alanine. May also act on other amino acids. This Salinispora tropica (strain ATCC BAA-916 / DSM 44818 / JCM 13857 / NBRC 105044 / CNB-440) protein is Alanine racemase (alr).